The sequence spans 625 residues: DNA-directed RNA polymerase subunit gamma (625 aa).

The Zn(2+) site is built by cysteine 71, cysteine 73, cysteine 86, and cysteine 89. Mg(2+) contacts are provided by aspartate 467, aspartate 469, and aspartate 471.

Belongs to the RNA polymerase beta' chain family. RpoC1 subfamily. In cyanobacteria the RNAP catalytic core is composed of 2 alpha, 1 beta, 1 beta', 1 gamma and 1 omega subunit. When a sigma factor is associated with the core the holoenzyme is formed, which can initiate transcription. Requires Mg(2+) as cofactor. The cofactor is Zn(2+).

The enzyme catalyses RNA(n) + a ribonucleoside 5'-triphosphate = RNA(n+1) + diphosphate. Its function is as follows. DNA-dependent RNA polymerase catalyzes the transcription of DNA into RNA using the four ribonucleoside triphosphates as substrates. The chain is DNA-directed RNA polymerase subunit gamma from Gloeothece citriformis (strain PCC 7424) (Cyanothece sp. (strain PCC 7424)).